The primary structure comprises 216 residues: Ribonuclease HII (216 aa).

The 189-residue stretch at 28–216 (DIVCGVDEAG…PVRAALDLIR (189 aa)) folds into the RNase H type-2 domain. Residues aspartate 34, glutamate 35, and aspartate 126 each coordinate a divalent metal cation.

The protein belongs to the RNase HII family. It depends on Mn(2+) as a cofactor. The cofactor is Mg(2+).

Its subcellular location is the cytoplasm. The catalysed reaction is Endonucleolytic cleavage to 5'-phosphomonoester.. Endonuclease that specifically degrades the RNA of RNA-DNA hybrids. This is Ribonuclease HII from Burkholderia vietnamiensis (strain G4 / LMG 22486) (Burkholderia cepacia (strain R1808)).